The following is a 96-amino-acid chain: Evasin P1100 (96 aa).

Positions 1–28 are cleaved as a signal peptide; the sequence is MAFNVITFLQFSVFVVILFNINLHSASA. Disulfide bonds link cysteine 48/cysteine 67, cysteine 52/cysteine 69, and cysteine 63/cysteine 80. N-linked (GlcNAc...) asparagine glycosylation occurs at asparagine 51. Asparagine 74 carries an N-linked (GlcNAc...) asparagine glycan.

It localises to the secreted. Its function is as follows. Salivary chemokine-binding protein which binds to host chemokines CXCL1, CXCL2, CXCL3, CXCL5, CXCL6, CXCL10, CXCL11 and CXCL13. This chain is Evasin P1100, found in Ixodes ricinus (Common tick).